The primary structure comprises 200 residues: MIGHLRGIIVEKQPPYLLLEVAGVGYEITAPLSTFYHLPEPQEEILLYTHLIVREDAHTLYGFHNDHERRLFRALIKVNGVGPKLALAILSGIGPDEFVHCVLNQNIDQLVRIPGVGRKTAERLVIETKDRLSRWHTNDTPSPEGLRSSNTQPTQDAISALMALGYKPQEAKRAIDAIQKPDLSAETLIRLALKQMVLGT.

Residues Met1–His64 form a domain I region. Positions Asn65–Pro143 are domain II. The tract at residues Glu144–Ser148 is flexible linker. Residues Ser149 to Thr200 form a domain III region.

Belongs to the RuvA family. Homotetramer. Forms an RuvA(8)-RuvB(12)-Holliday junction (HJ) complex. HJ DNA is sandwiched between 2 RuvA tetramers; dsDNA enters through RuvA and exits via RuvB. An RuvB hexamer assembles on each DNA strand where it exits the tetramer. Each RuvB hexamer is contacted by two RuvA subunits (via domain III) on 2 adjacent RuvB subunits; this complex drives branch migration. In the full resolvosome a probable DNA-RuvA(4)-RuvB(12)-RuvC(2) complex forms which resolves the HJ.

The protein localises to the cytoplasm. In terms of biological role, the RuvA-RuvB-RuvC complex processes Holliday junction (HJ) DNA during genetic recombination and DNA repair, while the RuvA-RuvB complex plays an important role in the rescue of blocked DNA replication forks via replication fork reversal (RFR). RuvA specifically binds to HJ cruciform DNA, conferring on it an open structure. The RuvB hexamer acts as an ATP-dependent pump, pulling dsDNA into and through the RuvAB complex. HJ branch migration allows RuvC to scan DNA until it finds its consensus sequence, where it cleaves and resolves the cruciform DNA. In Coxiella burnetii (strain CbuG_Q212) (Coxiella burnetii (strain Q212)), this protein is Holliday junction branch migration complex subunit RuvA.